The following is a 108-amino-acid chain: uncharacterized protein (108 aa).

This is an uncharacterized protein from Acidianus sp. F28 (AFV-2).